We begin with the raw amino-acid sequence, 508 residues long: Phenylalanine--tRNA ligase alpha subunit (508 aa).

The residue at position 2 (A2) is an N-acetylalanine. Phosphoserine occurs at positions 193 and 301. Position 311 is an N6-acetyllysine (K311). L-phenylalanine contacts are provided by residues T329, 372 to 374 (QIE), and Y412. E414 is a Mg(2+) binding site. F438 is a binding site for L-phenylalanine.

It belongs to the class-II aminoacyl-tRNA synthetase family. Phe-tRNA synthetase alpha subunit type 2 subfamily. In terms of assembly, heterotetramer; dimer of two heterodimers formed by FARSA and FARSB. Requires Mg(2+) as cofactor.

The protein localises to the cytoplasm. It carries out the reaction tRNA(Phe) + L-phenylalanine + ATP = L-phenylalanyl-tRNA(Phe) + AMP + diphosphate + H(+). The sequence is that of Phenylalanine--tRNA ligase alpha subunit (Farsa) from Rattus norvegicus (Rat).